A 112-amino-acid chain; its full sequence is Diuretic hormone class 2 (112 aa).

Residues 1–24 (MVRATCLLASCVLFALLLIVPASA) form the signal peptide. Positions 25 to 71 (YPRYPSNYFREEGQYEPEEIMDMLNRLGNLIQMERKMENYKEDITSE) are excised as a propeptide. At Pro104 the chain carries Proline amide. Residues 108–112 (RRDAH) constitute a propeptide that is removed on maturation.

Expressed in corpora cardiaca (CC), corpora allata (CA), antennal lobe (AL) and gnathal ganglion (GNG) (at protein level). Expression in CC, CA and AL detected in most animals, expression in GNG in few animals (at protein level).

The protein resides in the secreted. In terms of biological role, regulation of fluid secretion. Stimulates Malpighian tubule fluid secretion. This is Diuretic hormone class 2 from Agrotis ipsilon (Black cutworm moth).